Reading from the N-terminus, the 263-residue chain is Splicing regulator sde2 (263 aa).

The propeptide at 1–84 (MECKTVFLNG…LTLCTRVLGG (84 aa)) is UBL. 3 disordered regions span residues 95–118 (AGGRMSKKRNEQENQDSCRDLDGN), 137–158 (PAETRAKKEAKKQKLNKVLAAD), and 194–263 (STSA…LYGL). Residues 102-117 (KRNEQENQDSCRDLDG) show a composition bias toward basic and acidic residues. 2 stretches are compositionally biased toward low complexity: residues 194 to 209 (STSASSFSSGSNGATT) and 219 to 230 (NNNSSINSWSRR).

This sequence belongs to the SDE2 family. In terms of assembly, interacts with cay1/cactin. Interacts with prp19. Interacts with cwf12. Interacts with cdc5. In terms of processing, the N-terminal UBL (ubiquitin-like) propeptide is cleaved at Gly-84 by the deubiquitinating enzymes ubp5 and ubp15; the resulting mature sde2 associates with spliceosomes. Post-translationally, polyubiquitinated; ubiquitination is partially dependent on ubr11.

It is found in the cytoplasm. Its subcellular location is the nucleus. In terms of biological role, plays a role in pre-mRNA splicing by facilitating excision of introns featuring relatively long (&gt;21 nucleotides) spacing between the branchpoint and 3'-splice site (ss). Recruits cactin to the spliceosome which may enable folding of RNA between the branchpoint and 3'-ss, to guide the splice site towards the spliceosome's catalytic center. Required for proper chromatin organization by assisting splicing of components involved in genomic stability and telomere organization. The chain is Splicing regulator sde2 from Schizosaccharomyces pombe (strain 972 / ATCC 24843) (Fission yeast).